The following is a 415-amino-acid chain: Serine hydroxymethyltransferase (415 aa).

Residues Leu-119 and 123 to 125 contribute to the (6S)-5,6,7,8-tetrahydrofolate site; that span reads GHL. N6-(pyridoxal phosphate)lysine is present on Lys-228.

This sequence belongs to the SHMT family. Homodimer. Pyridoxal 5'-phosphate is required as a cofactor.

The protein localises to the cytoplasm. The catalysed reaction is (6R)-5,10-methylene-5,6,7,8-tetrahydrofolate + glycine + H2O = (6S)-5,6,7,8-tetrahydrofolate + L-serine. Its pathway is one-carbon metabolism; tetrahydrofolate interconversion. The protein operates within amino-acid biosynthesis; glycine biosynthesis; glycine from L-serine: step 1/1. In terms of biological role, catalyzes the reversible interconversion of serine and glycine with tetrahydrofolate (THF) serving as the one-carbon carrier. This reaction serves as the major source of one-carbon groups required for the biosynthesis of purines, thymidylate, methionine, and other important biomolecules. Also exhibits THF-independent aldolase activity toward beta-hydroxyamino acids, producing glycine and aldehydes, via a retro-aldol mechanism. The protein is Serine hydroxymethyltransferase of Coprothermobacter proteolyticus (strain ATCC 35245 / DSM 5265 / OCM 4 / BT).